The following is a 161-amino-acid chain: Nucleotide-binding protein PBPRA2024 (161 aa).

Belongs to the YajQ family.

Its function is as follows. Nucleotide-binding protein. The protein is Nucleotide-binding protein PBPRA2024 of Photobacterium profundum (strain SS9).